The following is a 141-amino-acid chain: MAKEVIQIIKLQLPAGKANPAPPVGPALGQHGVNIMEFCKAFNAKTQDKAGWIIPVEISVYSDRSFTFILKTPPASDLLKKAAGITSGAKNSKKEVAGKITTAKLKELAETKMPDLNASSVETAMKIIAGSARSMGIKIED.

The protein belongs to the universal ribosomal protein uL11 family. Part of the ribosomal stalk of the 50S ribosomal subunit. Interacts with L10 and the large rRNA to form the base of the stalk. L10 forms an elongated spine to which L12 dimers bind in a sequential fashion forming a multimeric L10(L12)X complex. Post-translationally, one or more lysine residues are methylated.

In terms of biological role, forms part of the ribosomal stalk which helps the ribosome interact with GTP-bound translation factors. This is Large ribosomal subunit protein uL11 from Fusobacterium nucleatum subsp. nucleatum (strain ATCC 25586 / DSM 15643 / BCRC 10681 / CIP 101130 / JCM 8532 / KCTC 2640 / LMG 13131 / VPI 4355).